A 76-amino-acid polypeptide reads, in one-letter code: Kappa-actitoxin-Avd4d (76 aa).

A signal peptide spans 1 to 19; it reads MNKALFLCLVVLCAAVVFA. The propeptide occupies 20–31; that stretch reads AEDLQKAKHVPF. Cystine bridges form between Cys-37–Cys-72, Cys-39–Cys-65, and Cys-55–Cys-73.

Belongs to the sea anemone type 3 (BDS) potassium channel toxin family. As to expression, moderately expressed in the ectodermal tissue from the distal and proximal tentacles, body wall, and oral disk.

The protein localises to the secreted. Its subcellular location is the nematocyst. Blocks Kv3 voltage-gated potassium channels. Reduces blood pressure. The sequence is that of Kappa-actitoxin-Avd4d from Anemonia viridis (Snakelocks anemone).